A 478-amino-acid polypeptide reads, in one-letter code: Early growth response protein 4 (478 aa).

The interval 275–302 (TEGLPALLTPPGGEGGSGGEGGEFLAAP) is disordered. Over residues 286-296 (GGEGGSGGEGG) the composition is skewed to gly residues. C2H2-type zinc fingers lie at residues 372–396 (FACPVESCVRSFARSDELNRHLRIH), 402–424 (FQCRICLRNFSRSDHLTTHVRTH), and 430–452 (FACDVCGRRFARSDEKKRHSKVH).

This sequence belongs to the EGR C2H2-type zinc-finger protein family.

It is found in the nucleus. Its function is as follows. Transcriptional regulator. Recognizes and binds to the DNA sequence 5'-GCGGGGGCG-3' (GSG). Activates the transcription of target genes whose products are required for mitogenesis and differentiation. This is Early growth response protein 4 (Egr4) from Mus musculus (Mouse).